The following is a 540-amino-acid chain: MNHSTSDQSLYIESDDGDDERKHLSDDEDDDGTLSDTSDAYNQNQHHLSKASPYSTAWPKSYRQSIDMFGSVPSPNLGFLANSSMSRRGSSFMSSTLTRRHTPESLPCVTKPLLEDEEAPKHKLSTHSLLPSKPSSSMVVSHDMGISNDSSFGQAVLNGVNVLCGVGILSTPYAVKEGGWLGLIILFAFGILCFYTGLLLRYCLDSHPDVQTYPDIGHAAFGSTGRILVSVILYMELYAMSVEYIILEGDNLSSMFPNASLSIGGFHLDAPRLFALLTTLAVLPTVWLRDLSVLSYISAGGVIASVLVVLCLFWVGLVDDVGIHSKGTPLNLATLPVSVGLYGYCYSGHGVFPNIYTSMAKPSQFSAVLLASFGICTLMYAGVAVMGYSMFGESTESQFTLNLPQDLVASKIALWTTVVNPFTKYALTLSPVAMSLEELIPSNYGKSRFYAIAIRSALAISTLLVGLAIPFFGLVMSLIGSFLTMLITLILPPACFLSILRKKVTPTQVTICILIMTVGAVCSVIGTYSALAKIIEKLNT.

The span at 1–11 (MNHSTSDQSLY) shows a compositional bias: polar residues. Positions 1-55 (MNHSTSDQSLYIESDDGDDERKHLSDDEDDDGTLSDTSDAYNQNQHHLSKASPYS) are disordered. 11 helical membrane passes run 155–175 (AVLNGVNVLCGVGILSTPYAV), 180–200 (WLGLIILFAFGILCFYTGLLL), 227–247 (ILVSVILYMELYAMSVEYIIL), 273–293 (LFALLTTLAVLPTVWLRDLSV), 297–317 (ISAGGVIASVLVVLCLFWVGL), 332–352 (LATLPVSVGLYGYCYSGHGVF), 367–387 (AVLLASFGICTLMYAGVAVMG), 412–432 (IALWTTVVNPFTKYALTLSPV), 452–474 (IAIRSALAISTLLVGLAIPFFGL), 478–500 (LIGSFLTMLITLILPPACFLSIL), and 511–531 (ICILIMTVGAVCSVIGTYSAL).

It belongs to the amino acid/polyamine transporter 2 family. Amino acid/auxin permease (AAAP) (TC 2.A.18.5) subfamily.

The protein resides in the membrane. The sequence is that of Amino acid transporter AVT1B from Arabidopsis thaliana (Mouse-ear cress).